The chain runs to 96 residues: Large ribosomal subunit protein uL23 (96 aa).

The protein belongs to the universal ribosomal protein uL23 family. In terms of assembly, part of the 50S ribosomal subunit. Contacts protein L29, and trigger factor when it is bound to the ribosome.

One of the early assembly proteins it binds 23S rRNA. One of the proteins that surrounds the polypeptide exit tunnel on the outside of the ribosome. Forms the main docking site for trigger factor binding to the ribosome. In Oleidesulfovibrio alaskensis (strain ATCC BAA-1058 / DSM 17464 / G20) (Desulfovibrio alaskensis), this protein is Large ribosomal subunit protein uL23.